The following is a 659-amino-acid chain: Hemocyanin subunit B (659 aa).

Residues 1–18 form the signal peptide; it reads MVAKWCVLAMCLLVAVGA. Cu cation contacts are provided by H198, H202, and H232. N-linked (GlcNAc...) asparagine glycosylation occurs at N318. Residues H353, H357, and H393 each contribute to the Cu cation site. The cysteines at positions 562 and 609 are disulfide-linked.

The protein belongs to the tyrosinase family. Hemocyanin subfamily. As to quaternary structure, 36-chain polymer consisting of 6 hexamers, each of which includes 4 different chains, A, B, C and D. Hemolymph.

The protein localises to the secreted. It is found in the extracellular space. Its function is as follows. Hemocyanins are copper-containing oxygen carriers occurring freely dissolved in the hemolymph of many mollusks and arthropods. This is Hemocyanin subunit B (HCB) from Scutigera coleoptrata (House centipede).